The chain runs to 218 residues: Probable transaldolase (218 aa).

The Schiff-base intermediate with substrate role is filled by Lys-87.

It belongs to the transaldolase family. Type 3B subfamily.

The protein resides in the cytoplasm. It catalyses the reaction D-sedoheptulose 7-phosphate + D-glyceraldehyde 3-phosphate = D-erythrose 4-phosphate + beta-D-fructose 6-phosphate. The protein operates within carbohydrate degradation; pentose phosphate pathway; D-glyceraldehyde 3-phosphate and beta-D-fructose 6-phosphate from D-ribose 5-phosphate and D-xylulose 5-phosphate (non-oxidative stage): step 2/3. Transaldolase is important for the balance of metabolites in the pentose-phosphate pathway. This is Probable transaldolase from Bacteroides thetaiotaomicron (strain ATCC 29148 / DSM 2079 / JCM 5827 / CCUG 10774 / NCTC 10582 / VPI-5482 / E50).